Reading from the N-terminus, the 128-residue chain is Fluoride-specific ion channel FluC (128 aa).

4 helical membrane passes run 1–21 (MPERYAALLLVGAGGFVGATA), 45–65 (LAGCFLIGFISQLSVSSSLVS), 70–90 (LLLATGFCGGFTTFSSYMYEI), and 99–119 (IFYSTLYLLGSIVGGILCLYF). Positions 78 and 81 each coordinate Na(+).

The protein belongs to the fluoride channel Fluc/FEX (TC 1.A.43) family.

It localises to the cell inner membrane. It catalyses the reaction fluoride(in) = fluoride(out). Its activity is regulated as follows. Na(+) is not transported, but it plays an essential structural role and its presence is essential for fluoride channel function. Fluoride-specific ion channel. Important for reducing fluoride concentration in the cell, thus reducing its toxicity. This Chlorobium phaeobacteroides (strain BS1) protein is Fluoride-specific ion channel FluC.